A 402-amino-acid chain; its full sequence is Multidrug resistance protein MdtH (402 aa).

The Cytoplasmic portion of the chain corresponds to 1–12 (MSRVSQARNLGK). A helical membrane pass occupies residues 13 to 33 (YFLLIDNMLVVLGFFVVFPLI). Residues 34-98 (SIRFVDQMGW…GFATMGIAHE (65 aa)) lie on the Periplasmic side of the membrane. A helical membrane pass occupies residues 99-116 (PWLLWFSCLLSGLGGTLF). Over 117–138 (DPPRSALVVKLIRPQQRGRFFS) the chain is Cytoplasmic. Residues 139-159 (LLMMQDSAGAVIGALLGSWLL) traverse the membrane as a helical segment. Residues 160–164 (QYDFR) lie on the Periplasmic side of the membrane. The chain crosses the membrane as a helical span at residues 165 to 185 (LVCATGAVLFVLCAAFNAWLL). Residues 186 to 213 (PAWKLSTVRTPVREGMTRVMRDKRFVTY) are Cytoplasmic-facing. Residues 214–234 (VLTLAGYYMLAVQVMLMLPIM) form a helical membrane-spanning segment. Topologically, residues 235–243 (VNDVAGAPS) are periplasmic. The helical transmembrane segment at 244–264 (AVKWMYAIEACLSLTLLYPIA) threads the bilayer. Residues 265–276 (RWSEKHFRLEHR) lie on the Cytoplasmic side of the membrane. Residues 277-297 (LMAGLLIMSLSMMPVGMVSGL) form a helical membrane-spanning segment. Residues 298–299 (QQ) lie on the Periplasmic side of the membrane. The chain crosses the membrane as a helical span at residues 300-320 (LFNLICLFYIGSIIAEPARET). Topologically, residues 321-339 (LSASLADARARGSYMGFSR) are cytoplasmic. The chain crosses the membrane as a helical span at residues 340-360 (LGLAIGGAIGYIGGGWLFDLG). Residues 361 to 367 (KSAHQPE) are Periplasmic-facing. The chain crosses the membrane as a helical span at residues 368–388 (LPWMMLGIIGIFTFLALGWQF). Topologically, residues 389–402 (SQKRAARRLLERDA) are cytoplasmic.

The protein belongs to the major facilitator superfamily. DHA1 family. MdtH (TC 2.A.1.2.21) subfamily.

The protein localises to the cell inner membrane. Functionally, confers resistance to norfloxacin and enoxacin. In Escherichia coli O9:H4 (strain HS), this protein is Multidrug resistance protein MdtH.